Here is a 244-residue protein sequence, read N- to C-terminus: DNA repair protein RecO (244 aa).

The protein belongs to the RecO family.

Its function is as follows. Involved in DNA repair and RecF pathway recombination. The chain is DNA repair protein RecO from Ehrlichia chaffeensis (strain ATCC CRL-10679 / Arkansas).